Reading from the N-terminus, the 513-residue chain is Ribonuclease Y (513 aa).

Residues 6–26 (YIIIAVVIIIICVILGLYIVD) form a helical membrane-spanning segment. The region spanning 203–288 (TVHVVNLPND…EMVEKAKKEV (86 aa)) is the KH domain. Positions 329–422 (VLKHSIEVSH…VQAADAISAA (94 aa)) constitute an HD domain.

It belongs to the RNase Y family.

It is found in the cell membrane. Endoribonuclease that initiates mRNA decay. The chain is Ribonuclease Y from Clostridium botulinum (strain ATCC 19397 / Type A).